We begin with the raw amino-acid sequence, 166 residues long: Large ribosomal subunit protein uL10 (166 aa).

It belongs to the universal ribosomal protein uL10 family. As to quaternary structure, part of the ribosomal stalk of the 50S ribosomal subunit. The N-terminus interacts with L11 and the large rRNA to form the base of the stalk. The C-terminus forms an elongated spine to which L12 dimers bind in a sequential fashion forming a multimeric L10(L12)X complex.

In terms of biological role, forms part of the ribosomal stalk, playing a central role in the interaction of the ribosome with GTP-bound translation factors. In Pseudomonas syringae pv. tomato (strain ATCC BAA-871 / DC3000), this protein is Large ribosomal subunit protein uL10.